The sequence spans 268 residues: Ribosomal RNA small subunit methyltransferase A (268 aa).

S-adenosyl-L-methionine contacts are provided by asparagine 18, leucine 20, glycine 45, glutamate 66, aspartate 91, and asparagine 112.

Belongs to the class I-like SAM-binding methyltransferase superfamily. rRNA adenine N(6)-methyltransferase family. RsmA subfamily.

Its subcellular location is the cytoplasm. The catalysed reaction is adenosine(1518)/adenosine(1519) in 16S rRNA + 4 S-adenosyl-L-methionine = N(6)-dimethyladenosine(1518)/N(6)-dimethyladenosine(1519) in 16S rRNA + 4 S-adenosyl-L-homocysteine + 4 H(+). Specifically dimethylates two adjacent adenosines (A1518 and A1519) in the loop of a conserved hairpin near the 3'-end of 16S rRNA in the 30S particle. May play a critical role in biogenesis of 30S subunits. The sequence is that of Ribosomal RNA small subunit methyltransferase A from Shewanella sp. (strain MR-7).